The sequence spans 93 residues: Large ribosomal subunit protein uL23cz/uL23cy (93 aa).

It belongs to the universal ribosomal protein uL23 family. Part of the 50S ribosomal subunit.

It is found in the plastid. The protein localises to the chloroplast. Binds to 23S rRNA. The sequence is that of Large ribosomal subunit protein uL23cz/uL23cy (rpl23-A) from Arabidopsis thaliana (Mouse-ear cress).